Here is a 481-residue protein sequence, read N- to C-terminus: NADH-quinone oxidoreductase subunit N (481 aa).

13 helical membrane-spanning segments follow: residues 9-29 (MLPE…GIVV), 39-59 (AVSM…DHVA), 76-96 (CISR…FLCA), 104-124 (FSVV…AGHF), 158-178 (FFIL…LVYG), 205-225 (AFVL…MWAV), 232-252 (PMAA…LLLA), 265-285 (ILYG…LGAL), 293-313 (LLAY…VLHG), 318-338 (AIFH…SVLL), 359-379 (FVAF…PFLG), 399-419 (VAFP…FYCF), and 443-463 (LGLT…LFLA).

Belongs to the complex I subunit 2 family. In terms of assembly, NDH-1 is composed of 14 different subunits. Subunits NuoA, H, J, K, L, M, N constitute the membrane sector of the complex.

Its subcellular location is the cell inner membrane. The catalysed reaction is a quinone + NADH + 5 H(+)(in) = a quinol + NAD(+) + 4 H(+)(out). Functionally, NDH-1 shuttles electrons from NADH, via FMN and iron-sulfur (Fe-S) centers, to quinones in the respiratory chain. The immediate electron acceptor for the enzyme in this species is believed to be ubiquinone. Couples the redox reaction to proton translocation (for every two electrons transferred, four hydrogen ions are translocated across the cytoplasmic membrane), and thus conserves the redox energy in a proton gradient. This is NADH-quinone oxidoreductase subunit N from Anaplasma marginale (strain Florida).